Consider the following 204-residue polypeptide: Synaptosomal-associated protein 25-A (204 aa).

The span at 1-11 shows a compositional bias: basic and acidic residues; sequence MAEDADMRNEL. Positions 1–25 are disordered; sequence MAEDADMRNELSDMQQRADQLADES. T-SNARE coiled-coil homology domains follow at residues 19–81 and 138–200; these read DQLA…LNDL and DARE…ATKM.

It belongs to the SNAP-25 family.

It is found in the synapse. The protein localises to the synaptosome. It localises to the cell membrane. In terms of biological role, may play an important role in the synaptic function of specific neuronal systems. Associates with proteins involved in vesicle docking and membrane fusion. The chain is Synaptosomal-associated protein 25-A (snap25a) from Carassius auratus (Goldfish).